The following is a 351-amino-acid chain: Glycerol-1-phosphate dehydrogenase [NAD(P)+] (351 aa).

Residues 97–101 and 119–122 contribute to the NAD(+) site; these read GTVID and TSPS. Asp124 lines the substrate pocket. Ser128 is a binding site for NAD(+). Asp171 provides a ligand contact to substrate. The Zn(2+) site is built by Asp171 and His251. Position 255 (His255) interacts with substrate. His267 contacts Zn(2+).

It belongs to the glycerol-1-phosphate dehydrogenase family. In terms of assembly, homodimer. Requires Zn(2+) as cofactor.

The protein resides in the cytoplasm. It catalyses the reaction sn-glycerol 1-phosphate + NAD(+) = dihydroxyacetone phosphate + NADH + H(+). The catalysed reaction is sn-glycerol 1-phosphate + NADP(+) = dihydroxyacetone phosphate + NADPH + H(+). It participates in membrane lipid metabolism; glycerophospholipid metabolism. Its function is as follows. Catalyzes the NAD(P)H-dependent reduction of dihydroxyacetonephosphate (DHAP or glycerone phosphate) to glycerol 1-phosphate (G1P). The G1P thus generated is used as the glycerophosphate backbone of phospholipids in the cellular membranes of Archaea. The protein is Glycerol-1-phosphate dehydrogenase [NAD(P)+] of Sulfolobus acidocaldarius (strain ATCC 33909 / DSM 639 / JCM 8929 / NBRC 15157 / NCIMB 11770).